The sequence spans 343 residues: Low conductance mechanosensitive channel YnaI (343 aa).

Residues 1-9 (MIAELFTNN) are Periplasmic-facing. Residues 10-30 (ALNLVIIFGSCAALILMSFWF) form a helical membrane-spanning segment. The Cytoplasmic portion of the chain corresponds to 31–40 (RRGNRKRKGF). A helical membrane pass occupies residues 41–61 (LFHAVQFLIYTIIISAVGSII). Topologically, residues 62–77 (NYVIENYKLKFITPGV) are periplasmic. Residues 78–98 (IDFICTSLIAVILTIKLFLLI) form a helical membrane-spanning segment. Topologically, residues 99 to 125 (NQFEKQQIKKGRDITSARIMSRIIKIT) are cytoplasmic. Residues 126–146 (IIVVLVLLYGEHFGMSLSGLL) form a helical membrane-spanning segment. Threonine 147 is a topological domain (periplasmic). The chain crosses the membrane as a helical span at residues 148-168 (FGGIGGLAVGMAGKDILSNFF). Over 169–343 (SGIMLYFDRP…DNITPPEQGR (175 aa)) the chain is Cytoplasmic.

It belongs to the MscS (TC 1.A.23) family. Homoheptamer.

It localises to the cell inner membrane. In terms of biological role, mechanosensitive channel that protects cells against hypoosmotic stress when highly overexpressed. The polypeptide is Low conductance mechanosensitive channel YnaI (ynaI) (Escherichia coli (strain K12)).